We begin with the raw amino-acid sequence, 142 residues long: Organic hydroperoxide resistance protein-like 2 (142 aa).

Belongs to the OsmC/Ohr family.

The polypeptide is Organic hydroperoxide resistance protein-like 2 (Staphylococcus saprophyticus subsp. saprophyticus (strain ATCC 15305 / DSM 20229 / NCIMB 8711 / NCTC 7292 / S-41)).